A 503-amino-acid polypeptide reads, in one-letter code: Discoidin, CUB and LCCL domain-containing protein 1 (503 aa).

An N-terminal signal peptide occupies residues 1-25 (MGTGAGGPSVLALLFAVCAPLRLQA). The Extracellular portion of the chain corresponds to 26-250 (EELGDGCGHI…FTTPGMNITT (225 aa)). 4 disulfides stabilise this stretch: Cys32-Cys59, Cys85-Cys103, Cys149-Cys165, and Cys169-Cys191. The 110-residue stretch at 32-141 (CGHIVTSQDS…RGFLLTYASS (110 aa)) folds into the CUB domain. An N-linked (GlcNAc...) asparagine glycan is attached at Asn55. The LCCL domain occupies 143–239 (HPDLITCLER…RHGSLSEKRF (97 aa)). Asn247 carries N-linked (GlcNAc...) asparagine glycosylation. Residues 251-271 (VAIPSVIFIALLLTGMGIFAI) traverse the membrane as a helical segment. The Cytoplasmic portion of the chain corresponds to 272–503 (CRKRKKKGNP…LNQTAMTALL (232 aa)). Ser305 bears the Phosphoserine mark. Thr406 bears the Phosphothreonine mark. Positions 410 to 503 (QSGYRVPGPR…LNQTAMTALL (94 aa)) are disordered. Polar residues predominate over residues 494-503 (LNQTAMTALL).

It localises to the membrane. This is Discoidin, CUB and LCCL domain-containing protein 1 (Dcbld1) from Mus musculus (Mouse).